Reading from the N-terminus, the 495-residue chain is Protein-serine O-palmitoleoyltransferase porcupine (495 aa).

The next 8 helical transmembrane spans lie at 46–66 (TQYITNFIAINLLFSVLVLIV), 92–112 (VIDHGFYHFLQLAVSLYAVQW), 184–204 (TVLSYSGYILCPANIVLGPWI), 232–252 (MLIHVFRIVTSALMAVGFLLT), 358–378 (PFGTGTAIALTYIISSLLHGL), 403–422 (LATIYSACVLVGKCPSSCTV), 434–454 (VINMLFFALNIFNLIYLGCIF), and 475–495 (TELNYASHWLLVFAYLFYFVI). Residue His-376 is part of the active site.

This sequence belongs to the membrane-bound acyltransferase family. Porcupine subfamily.

It is found in the endoplasmic reticulum membrane. It catalyses the reaction [Wnt protein]-L-serine + (9Z)-hexadecenoyl-CoA = [Wnt protein]-O-(9Z)-hexadecenoyl-L-serine + CoA. Protein-serine O-palmitoleoyltransferase that acts as a key regulator of the Wnt signaling pathway by mediating the attachment of palmitoleate, a 16-carbon monounsaturated fatty acid (C16:1(9Z)), to Wnt proteins. Serine palmitoleoylation of WNT proteins is required for efficient binding to frizzled receptors. The protein is Protein-serine O-palmitoleoyltransferase porcupine of Anopheles gambiae (African malaria mosquito).